Reading from the N-terminus, the 411-residue chain is MATLSSYLLSSPPLCKSRFSATSLVSGIDFISFSPRTTLSSSSTVLPAILSLSVKHNRRRNSLQVKSVASPTETISEFDEMVSGTKRKYYMLGGKGGVGKTSCAASLAVRFANNGHPTLVVSTDPAHSLSDSFAQDLTGGMLVPVEGPEAPLFALEINPEKAREEFRSASQMNGGTGVKDFMDGMGLGMLVEQLGELKLGELLDTPPPGLDEAIAISKVIQFLESPEYNMFTRIVFDTAPTGHTLRLLSLPDFLDASIGKILKLRQKITSATSAIKSVFGKEEKGPDAADKLEKLRERMVKVRELFRDTESTEFVIVTIPTVMAVSESSRLSASLKKESVPVKRLIVNQLLPPSSSDCKFCSIKRKDQMRALDMIREDSELSALTLMEAPLVDMEIRGVPALRFLGDIIWK.

Residues methionine 1 to serine 67 constitute a chloroplast transit peptide. Position 95-102 (lysine 95–serine 102) interacts with ATP. Aspartate 124 is an active-site residue. Position 348 (asparagine 348) interacts with ATP.

Belongs to the arsA ATPase family.

The protein resides in the plastid. The protein localises to the chloroplast stroma. It catalyses the reaction ATP + H2O = ADP + phosphate + H(+). The polypeptide is ATPase GET3B (Arabidopsis thaliana (Mouse-ear cress)).